Here is a 101-residue protein sequence, read N- to C-terminus: Putative pterin-4-alpha-carbinolamine dehydratase (101 aa).

This sequence belongs to the pterin-4-alpha-carbinolamine dehydratase family.

It carries out the reaction (4aS,6R)-4a-hydroxy-L-erythro-5,6,7,8-tetrahydrobiopterin = (6R)-L-erythro-6,7-dihydrobiopterin + H2O. The protein is Putative pterin-4-alpha-carbinolamine dehydratase of Burkholderia mallei (strain ATCC 23344).